The chain runs to 124 residues: MGAEARLSRQRAYRKGHRGEWLAAFALRLKGYRILAHRFKTPLGEIDLIARRGDLVAIVEVKARPTLGEAMEAVSFTAQRRIDAAADLWLSRQPDYARLSLRYDLVAVLPRRWPVHVENIYAAR.

It belongs to the UPF0102 family.

In Chelativorans sp. (strain BNC1), this protein is UPF0102 protein Meso_4010.